We begin with the raw amino-acid sequence, 138 residues long: MQDSPANVVQPDWLDDIQWTEDGLVPAIAQDADNGDILMMAWMNRESLRLTVEEGQAVYWSRSRGKLWRKGESSGHQQVLRDIRLDCDADVVLLKVEQKGGIACHTGRRSCFYRTLKDGQWVSADPVIKDPNTIYGSN.

Asp86 serves as a coordination point for Mg(2+). Cys87 lines the Zn(2+) pocket. The Mg(2+) site is built by Asp88 and Asp90. Positions 104 and 111 each coordinate Zn(2+).

This sequence belongs to the PRA-CH family. In terms of assembly, homodimer. Mg(2+) serves as cofactor. Zn(2+) is required as a cofactor.

The protein resides in the cytoplasm. It carries out the reaction 1-(5-phospho-beta-D-ribosyl)-5'-AMP + H2O = 1-(5-phospho-beta-D-ribosyl)-5-[(5-phospho-beta-D-ribosylamino)methylideneamino]imidazole-4-carboxamide. It participates in amino-acid biosynthesis; L-histidine biosynthesis; L-histidine from 5-phospho-alpha-D-ribose 1-diphosphate: step 3/9. Catalyzes the hydrolysis of the adenine ring of phosphoribosyl-AMP. This chain is Phosphoribosyl-AMP cyclohydrolase, found in Marinobacter nauticus (strain ATCC 700491 / DSM 11845 / VT8) (Marinobacter aquaeolei).